The primary structure comprises 514 residues: 2,3-bisphosphoglycerate-independent phosphoglycerate mutase (514 aa).

Asp14 and Ser64 together coordinate Mn(2+). Residue Ser64 is the Phosphoserine intermediate of the active site. Residues His125, 155-156, Arg187, Arg193, 263-266, and Lys336 contribute to the substrate site; these read RD and RADR. Mn(2+) contacts are provided by Asp403, His407, Asp444, His445, and His463.

Belongs to the BPG-independent phosphoglycerate mutase family. As to quaternary structure, monomer. Mn(2+) serves as cofactor.

It catalyses the reaction (2R)-2-phosphoglycerate = (2R)-3-phosphoglycerate. The protein operates within carbohydrate degradation; glycolysis; pyruvate from D-glyceraldehyde 3-phosphate: step 3/5. Functionally, catalyzes the interconversion of 2-phosphoglycerate and 3-phosphoglycerate. The sequence is that of 2,3-bisphosphoglycerate-independent phosphoglycerate mutase from Salmonella choleraesuis (strain SC-B67).